We begin with the raw amino-acid sequence, 250 residues long: Small ribosomal subunit protein uS3 (250 aa).

In terms of domain architecture, KH type-2 spans 39–111 (IRTLIKNHYP…KVQINIFEVK (73 aa)).

It belongs to the universal ribosomal protein uS3 family. As to quaternary structure, part of the 30S ribosomal subunit. Forms a tight complex with proteins S10 and S14.

Functionally, binds the lower part of the 30S subunit head. Binds mRNA in the 70S ribosome, positioning it for translation. This is Small ribosomal subunit protein uS3 from Phytoplasma vitis (Flavescence doree phytoplasma).